A 224-amino-acid chain; its full sequence is MNSDLALLRLLQLASPGLPVGGFTYSQGLEWAVEAGWVRGVDGFVAWQREQVHDTLACLDWPVLARLYHACQAEDAAAFGHWSRFLLANRETAELRLEEQQRGAALARLLDGWQLGQAPAWRASLELSQLGGMAWLAAHWAIPLRQLALGHGFAWLEGAVMAGVKLVPFGQQAAQTLLRDLGNELPAALDQALGLGDDQLGGGLPLLAIASSRHETQYTRLFRS.

This sequence belongs to the UreF family. UreD, UreF and UreG form a complex that acts as a GTP-hydrolysis-dependent molecular chaperone, activating the urease apoprotein by helping to assemble the nickel containing metallocenter of UreC. The UreE protein probably delivers the nickel.

Its subcellular location is the cytoplasm. In terms of biological role, required for maturation of urease via the functional incorporation of the urease nickel metallocenter. This chain is Urease accessory protein UreF, found in Pseudomonas putida (strain GB-1).